Consider the following 347-residue polypeptide: Isopentenyl-diphosphate delta-isomerase (347 aa).

Residue 9–10 participates in substrate binding; sequence RK. FMN-binding positions include serine 67, 68 to 70, serine 98, and asparagine 127; that span reads SMT. Residue 98 to 100 coordinates substrate; the sequence is SQR. Position 162 (glutamine 162) interacts with substrate. Glutamate 163 provides a ligand contact to Mg(2+). FMN is bound by residues lysine 194, threonine 224, 274–276, and 295–296; these read GIR and AA.

Belongs to the IPP isomerase type 2 family. Homooctamer. Dimer of tetramers. It depends on FMN as a cofactor. NADPH serves as cofactor. Requires Mg(2+) as cofactor.

It is found in the cytoplasm. The enzyme catalyses isopentenyl diphosphate = dimethylallyl diphosphate. Its function is as follows. Involved in the biosynthesis of isoprenoids. Catalyzes the 1,3-allylic rearrangement of the homoallylic substrate isopentenyl (IPP) to its allylic isomer, dimethylallyl diphosphate (DMAPP). The chain is Isopentenyl-diphosphate delta-isomerase from Cronobacter sakazakii (strain ATCC BAA-894) (Enterobacter sakazakii).